A 432-amino-acid chain; its full sequence is PC-esterase domain-containing protein 1B (432 aa).

2 disordered regions span residues 273-312 (WESS…SPGL) and 407-432 (GPYM…SRPQ). Polar residues predominate over residues 285–294 (QDNIGPQFAQ). Residues 296–312 (PPYPFPRPPPLLPSPGL) show a composition bias toward pro residues.

Belongs to the PC-esterase family.

The protein is PC-esterase domain-containing protein 1B (Pced1b) of Rattus norvegicus (Rat).